Consider the following 603-residue polypeptide: NAD 5'-nucleotidase (603 aa).

An N-terminal signal peptide occupies residues 1–25 (MLLSKKSASFALSAFAMLFTSVALA). Residues Asp44, His46, Asp94, Asn126, and His227 each contribute to the Zn(2+) site. Residues Arg397, Arg437, Phe456, and 540-546 (YVAGGKD) each bind substrate.

This sequence belongs to the 5'-nucleotidase family. Requires Zn(2+) as cofactor.

The protein localises to the periplasm. The catalysed reaction is a ribonucleoside 5'-phosphate + H2O = a ribonucleoside + phosphate. In terms of biological role, degrades NAD into adenosine and nicotinamide riboside, the latter being subsequently internalized by a specific permease. Also endowed with NAD(P) pyrophosphatase activity. Exhibits a broad substrate specificity, recognizing either mono- or dinucleotide nicotinamides and different adenosine phosphates with a maximal activity on 5'-adenosine monophosphate. This chain is NAD 5'-nucleotidase, found in Haemophilus influenzae (strain ATCC 51907 / DSM 11121 / KW20 / Rd).